Reading from the N-terminus, the 686-residue chain is MLLRGVLLALQALQLAGALDLPAGSCAFEESTCGFDSVLASLPWILNEEGHYIYVDTSFGKQGEKAVLLSPDLQAEEWSCLRLVYQITTSSESLSDPSQLNLYMRFEDESFDRLLWSAKEPSDSWLIASLDLQNSSKKFKILIEGVLGQGNTASIALFEIKMTTGYCIECDFEENHLCGFVNRWNPNVNWFVGGGSIRNVHSILPQDHTFKSELGHYMYVDSVYVKHFQEVAQLISPLTTAPMAGCLSFYYQIQQGNDNVFSLYTRDVAGLYEEIWKADRPGNAAWNLAEVEFSAPYPMEVIFEVAFNGPKGGYVALDDISFSPVHCQNQTELLFSAVEASCNFEQDLCNFYQDKEGPGWTRVKVKPNMYRAGDHTTGLGYYLLANTKFTSQPGYIGRLYGPSLPGNLQYCLRFHYAIYGFLKMSDTLAVYIFEENHVVQEKIWSVLESPRGVWMQAEITFKKPMPTKVVFMSLCKSFWDCGLVALDDITIQLGSCSSSEKLPPPPGECTFEQDECTFTQEKRNRSSWHRRRGETPTSYTGPKGDHTTGVGYYMYIEASHMVYGQKARLLSRPLRGVSGKHCLTFFYHMYGGGTGLLSVYLKKEEDSEESLLWRRRGEQSISWLRALIEYSCERQHQIIFEAIRGVSIRSDIAIDDVKFQAGPCGEMEDTTQQSSGYSEDLNEIEY.

The first 18 residues, 1 to 18, serve as a signal peptide directing secretion; that stretch reads MLLRGVLLALQALQLAGA. MAM domains are found at residues 24-169, 168-329, 340-498, and 507-666; these read GSCA…YCIE, IECD…HCQN, ASCN…SCSS, and GECT…PCGE. Asparagine 134 and asparagine 329 each carry an N-linked (GlcNAc...) asparagine glycan. Disordered stretches follow at residues 521–543 and 665–686; these read EKRN…TGPK and GEME…EIEY. The N-linked (GlcNAc...) asparagine glycan is linked to asparagine 524.

In terms of processing, O-glycosylated.

Its subcellular location is the secreted. It is found in the extracellular space. It localises to the extracellular matrix. This chain is MAM domain-containing protein 2 (MAMDC2), found in Homo sapiens (Human).